The sequence spans 582 residues: Acylamino-acid-releasing enzyme (582 aa).

Catalysis depends on charge relay system residues Ser-445, Asp-524, and His-556.

This sequence belongs to the peptidase S9C family.

Its subcellular location is the cytoplasm. It carries out the reaction Cleavage of an N-acetyl or N-formyl amino acid from the N-terminus of a polypeptide.. Its function is as follows. This enzyme catalyzes the hydrolysis of the N-terminal peptide bond of an N-acetylated peptide to generate an N-acetylated amino acid and a peptide with a free N-terminus. This is Acylamino-acid-releasing enzyme from Aeropyrum pernix (strain ATCC 700893 / DSM 11879 / JCM 9820 / NBRC 100138 / K1).